Reading from the N-terminus, the 435-residue chain is Trigger factor (435 aa).

Positions 125 to 147 (MEVPEQDTSVSDADVDSELENKR) are disordered. The PPIase FKBP-type domain maps to 164 to 249 (GDTVVIDYEG…IHEVKEKQLP (86 aa)).

The protein belongs to the FKBP-type PPIase family. Tig subfamily.

The protein resides in the cytoplasm. The catalysed reaction is [protein]-peptidylproline (omega=180) = [protein]-peptidylproline (omega=0). Its function is as follows. Involved in protein export. Acts as a chaperone by maintaining the newly synthesized protein in an open conformation. Functions as a peptidyl-prolyl cis-trans isomerase. The protein is Trigger factor of Limosilactobacillus fermentum (strain NBRC 3956 / LMG 18251) (Lactobacillus fermentum).